The sequence spans 523 residues: AarF domain-containing protein kinase 1 (523 aa).

The Protein kinase domain occupies E148–L484. ATP contacts are provided by residues L154–V162 and K176. D308 (proton acceptor) is an active-site residue.

Belongs to the protein kinase superfamily. ADCK protein kinase family.

The protein resides in the mitochondrion. In terms of biological role, appears to be essential for maintaining mitochondrial cristae formation and mitochondrial function by acting via YME1L1 in a kinase-independent manner to regulate essential mitochondrial structural proteins OPA1 and IMMT. The action of this enzyme is not yet clear. It is not known if it has protein kinase activity and what type of substrate it would phosphorylate (Ser, Thr or Tyr). The sequence is that of AarF domain-containing protein kinase 1 (adck1) from Xenopus tropicalis (Western clawed frog).